Reading from the N-terminus, the 154-residue chain is SsrA-binding protein (154 aa).

A disordered region spans residues 131-154 (DKRQDLKQKEAKRDIERAFKERQQ). Over residues 132–154 (KRQDLKQKEAKRDIERAFKERQQ) the composition is skewed to basic and acidic residues.

This sequence belongs to the SmpB family.

Its subcellular location is the cytoplasm. Required for rescue of stalled ribosomes mediated by trans-translation. Binds to transfer-messenger RNA (tmRNA), required for stable association of tmRNA with ribosomes. tmRNA and SmpB together mimic tRNA shape, replacing the anticodon stem-loop with SmpB. tmRNA is encoded by the ssrA gene; the 2 termini fold to resemble tRNA(Ala) and it encodes a 'tag peptide', a short internal open reading frame. During trans-translation Ala-aminoacylated tmRNA acts like a tRNA, entering the A-site of stalled ribosomes, displacing the stalled mRNA. The ribosome then switches to translate the ORF on the tmRNA; the nascent peptide is terminated with the 'tag peptide' encoded by the tmRNA and targeted for degradation. The ribosome is freed to recommence translation, which seems to be the essential function of trans-translation. The sequence is that of SsrA-binding protein from Listeria innocua serovar 6a (strain ATCC BAA-680 / CLIP 11262).